Reading from the N-terminus, the 83-residue chain is MSSGGLLLLLGLLTLREGLTPVSSKDRPDFCELPDDRGPCRGIFHAFYYNPDQRQCLEFIYGGCYGNANNFKTIDECKRTCAA.

The signal sequence occupies residues 1–24; that stretch reads MSSGGLLLLLGLLTLREGLTPVSS. In terms of domain architecture, BPTI/Kunitz inhibitor spans 31 to 81; the sequence is CELPDDRGPCRGIFHAFYYNPDQRQCLEFIYGGCYGNANNFKTIDECKRTC. Intrachain disulfides connect C31-C81, C40-C64, and C56-C77.

The protein resides in the secreted. Serine protease inhibitor. In Pseudechis porphyriacus (Red-bellied black snake), this protein is Blackelin-4.